A 388-amino-acid chain; its full sequence is Acyl-CoA dehydrogenase fadE12 (388 aa).

The protein belongs to the acyl-CoA dehydrogenase family. FAD serves as cofactor.

The enzyme catalyses a 2,3-saturated acyl-CoA + A = a 2,3-dehydroacyl-CoA + AH2. The polypeptide is Acyl-CoA dehydrogenase fadE12 (fadE12) (Mycobacterium tuberculosis (strain CDC 1551 / Oshkosh)).